We begin with the raw amino-acid sequence, 245 residues long: Endogenous retrovirus group K member 5 Env polyprotein (245 aa).

Residues 1 to 245 (MVTPVTWMDN…TLEFGLEIKL (245 aa)) are truncated surface protein.

This sequence belongs to the beta type-B retroviral envelope protein family. HERV class-II K(HML-2) env subfamily. As to expression, expressed in lung, placenta, testis, peripheral blood lymphocytes, and teratocarcinoma cell lines.

It localises to the virion. In terms of biological role, retroviral envelope proteins mediate receptor recognition and membrane fusion during early infection. Endogenous envelope proteins may have kept, lost or modified their original function during evolution. This Homo sapiens (Human) protein is Endogenous retrovirus group K member 5 Env polyprotein (ERVK-5).